The chain runs to 950 residues: Leucine--tRNA ligase (950 aa).

The short motif at 66-77 (PYPSGAGLHVGH) is the 'HIGH' region element. The short motif at 721–725 (KIGKS) is the 'KMSKS' region element. Lys-724 lines the ATP pocket.

It belongs to the class-I aminoacyl-tRNA synthetase family.

The protein localises to the cytoplasm. The enzyme catalyses tRNA(Leu) + L-leucine + ATP = L-leucyl-tRNA(Leu) + AMP + diphosphate. The chain is Leucine--tRNA ligase from Nocardia farcinica (strain IFM 10152).